The sequence spans 364 residues: Thymidine kinase (364 aa).

Position 36–43 (36–43 (GPFGVGKT)) interacts with ATP. The active-site Proton acceptor is the Glu64. Gln108 contacts substrate. Residue Arg201 coordinates ATP. Arg207 is a substrate binding site.

This sequence belongs to the herpesviridae thymidine kinase family. As to quaternary structure, homodimer.

The catalysed reaction is thymidine + ATP = dTMP + ADP + H(+). Functionally, catalyzes the transfer of the gamma-phospho group of ATP to thymidine to generate dTMP in the salvage pathway of pyrimidine synthesis. The dTMP serves as a substrate for DNA polymerase during viral DNA replication. Allows the virus to be reactivated and to grow in non-proliferative cells lacking a high concentration of phosphorylated nucleic acid precursors. The protein is Thymidine kinase of Infectious laryngotracheitis virus (strain Thorne V882) (ILTV).